We begin with the raw amino-acid sequence, 652 residues long: Beta-mannosyltransferase 1 (652 aa).

Over 1-15 (MVDLFQWLKFYSMRR) the chain is Cytoplasmic. A helical membrane pass occupies residues 16–34 (LGQVAITLVLLNLFVFLGY). The Extracellular segment spans residues 35–652 (KFTPSTVIGS…LYQLQEEERS (618 aa)). N-linked (GlcNAc...) asparagine glycosylation occurs at asparagine 57. A coiled-coil region spans residues 535-652 (PARYAKQMEN…LYQLQEEERS (118 aa)). A disordered region spans residues 536-621 (ARYAKQMENE…EAKENEAKKK (86 aa)).

The protein belongs to the BMT family.

It localises to the membrane. Functionally, beta-mannosyltransferase involved in cell wall biosynthesis. Involved in the beta-mannosylation of outer chains of N-glycans. This is Beta-mannosyltransferase 1 (BMT1) from Komagataella phaffii (strain ATCC 76273 / CBS 7435 / CECT 11047 / NRRL Y-11430 / Wegner 21-1) (Yeast).